The sequence spans 341 residues: Protein BIG GRAIN 1-like C (341 aa).

Disordered regions lie at residues 28–61 (DGLQSDLKGSINENVSSSSSSPSPNKKDDKLTTL) and 76–138 (SSTT…SDDD). Residues 52–61 (NKKDDKLTTL) are compositionally biased toward basic and acidic residues. The segment covering 76-92 (SSTTTTNSSDSSSFSSS) has biased composition (low complexity). The span at 105-138 (KLAEQGKRSGDERQRTKRTVMDNDSRLFSKSDDD) shows a compositional bias: basic and acidic residues.

This sequence belongs to the BIG GRAIN 1 (BG1) plant protein family.

It localises to the cell membrane. Its function is as follows. Involved in auxin transport. Regulator of the auxin signaling pathway. This chain is Protein BIG GRAIN 1-like C, found in Arabidopsis thaliana (Mouse-ear cress).